A 405-amino-acid chain; its full sequence is Argininosuccinate synthase (405 aa).

ATP-binding positions include 10-18 (AYSGGLDTS) and A37. The L-citrulline site is built by Y88 and S93. An ATP-binding site is contributed by G118. Residues T120, N124, and D125 each coordinate L-aspartate. Residue N124 participates in L-citrulline binding. Positions 128, 179, 188, 264, and 276 each coordinate L-citrulline.

The protein belongs to the argininosuccinate synthase family. Type 1 subfamily. In terms of assembly, homotetramer.

The protein resides in the cytoplasm. The enzyme catalyses L-citrulline + L-aspartate + ATP = 2-(N(omega)-L-arginino)succinate + AMP + diphosphate + H(+). It functions in the pathway amino-acid biosynthesis; L-arginine biosynthesis; L-arginine from L-ornithine and carbamoyl phosphate: step 2/3. In Pseudomonas fluorescens (strain ATCC BAA-477 / NRRL B-23932 / Pf-5), this protein is Argininosuccinate synthase.